A 560-amino-acid polypeptide reads, in one-letter code: 2-succinyl-5-enolpyruvyl-6-hydroxy-3-cyclohexene-1-carboxylate synthase (560 aa).

Belongs to the TPP enzyme family. MenD subfamily. As to quaternary structure, homodimer. Requires Mg(2+) as cofactor. It depends on Mn(2+) as a cofactor. Thiamine diphosphate is required as a cofactor.

The catalysed reaction is isochorismate + 2-oxoglutarate + H(+) = 5-enolpyruvoyl-6-hydroxy-2-succinyl-cyclohex-3-ene-1-carboxylate + CO2. It participates in quinol/quinone metabolism; 1,4-dihydroxy-2-naphthoate biosynthesis; 1,4-dihydroxy-2-naphthoate from chorismate: step 2/7. Its pathway is quinol/quinone metabolism; menaquinone biosynthesis. In terms of biological role, catalyzes the thiamine diphosphate-dependent decarboxylation of 2-oxoglutarate and the subsequent addition of the resulting succinic semialdehyde-thiamine pyrophosphate anion to isochorismate to yield 2-succinyl-5-enolpyruvyl-6-hydroxy-3-cyclohexene-1-carboxylate (SEPHCHC). The chain is 2-succinyl-5-enolpyruvyl-6-hydroxy-3-cyclohexene-1-carboxylate synthase from Pectobacterium carotovorum subsp. carotovorum (strain PC1).